Consider the following 231-residue polypeptide: Uracil phosphoribosyltransferase (231 aa).

38 to 42 (KGLVR) lines the GTP pocket. 5-phospho-alpha-D-ribose 1-diphosphate is bound by residues arginine 87, arginine 112, and 140–148 (DPMIATGST). Uracil contacts are provided by residues isoleucine 203 and 208-210 (GDA). Residue aspartate 209 coordinates 5-phospho-alpha-D-ribose 1-diphosphate.

The protein belongs to the UPRTase family. The cofactor is Mg(2+).

It carries out the reaction UMP + diphosphate = 5-phospho-alpha-D-ribose 1-diphosphate + uracil. It functions in the pathway pyrimidine metabolism; UMP biosynthesis via salvage pathway; UMP from uracil: step 1/1. With respect to regulation, allosterically activated by GTP. Functionally, catalyzes the conversion of uracil and 5-phospho-alpha-D-ribose 1-diphosphate (PRPP) to UMP and diphosphate. The sequence is that of Uracil phosphoribosyltransferase from Methanococcus maripaludis (strain DSM 14266 / JCM 13030 / NBRC 101832 / S2 / LL).